A 65-amino-acid polypeptide reads, in one-letter code: Small ribosomal subunit protein eS27 (65 aa).

Cysteine 21, cysteine 24, cysteine 40, and cysteine 43 together coordinate Zn(2+). The C4-type zinc-finger motif lies at 21-43; it reads CKDCGNVQVVFARPSSVVTCNIC.

The protein belongs to the eukaryotic ribosomal protein eS27 family. Part of the 30S ribosomal subunit. Requires Zn(2+) as cofactor.

This is Small ribosomal subunit protein eS27 from Thermoplasma volcanium (strain ATCC 51530 / DSM 4299 / JCM 9571 / NBRC 15438 / GSS1).